The following is a 244-amino-acid chain: 1-(5-phosphoribosyl)-5-[(5-phosphoribosylamino)methylideneamino] imidazole-4-carboxamide isomerase (244 aa).

Aspartate 10 serves as the catalytic Proton acceptor. The Proton donor role is filled by aspartate 132.

This sequence belongs to the HisA/HisF family.

Its subcellular location is the cytoplasm. It catalyses the reaction 1-(5-phospho-beta-D-ribosyl)-5-[(5-phospho-beta-D-ribosylamino)methylideneamino]imidazole-4-carboxamide = 5-[(5-phospho-1-deoxy-D-ribulos-1-ylimino)methylamino]-1-(5-phospho-beta-D-ribosyl)imidazole-4-carboxamide. It participates in amino-acid biosynthesis; L-histidine biosynthesis; L-histidine from 5-phospho-alpha-D-ribose 1-diphosphate: step 4/9. This chain is 1-(5-phosphoribosyl)-5-[(5-phosphoribosylamino)methylideneamino] imidazole-4-carboxamide isomerase, found in Stenotrophomonas maltophilia (strain R551-3).